A 154-amino-acid chain; its full sequence is Putative antiporter subunit mnhG2 (154 aa).

The next 3 membrane-spanning stretches (helical) occupy residues 11-31 (IASILIFLGSIIALISAIGIV), 51-71 (VLLTVVGVLIYFIVNSGFFSV), and 72-92 (RLLLSLVFINLTSPVGMHLIS).

This sequence belongs to the CPA3 antiporters (TC 2.A.63) subunit G family. May form a heterooligomeric complex that consists of seven subunits: mnhA2, mnhB2, mnhC2, mnhD2, mnhE2, mnhF2 and mnhG2.

The protein localises to the cell membrane. The chain is Putative antiporter subunit mnhG2 (mnhG2) from Staphylococcus epidermidis (strain ATCC 35984 / DSM 28319 / BCRC 17069 / CCUG 31568 / BM 3577 / RP62A).